A 649-amino-acid chain; its full sequence is DNA mismatch repair protein MutL (649 aa).

The segment at 339 to 414 (KKKTKDESVQ…VREEESWQST (76 aa)) is disordered. The segment covering 342 to 360 (TKDESVQEQFHFEHTKPKE) has biased composition (basic and acidic residues). The segment covering 388–402 (PQLWQQPKQEWQPPQ) has biased composition (low complexity).

Belongs to the DNA mismatch repair MutL/HexB family.

Its function is as follows. This protein is involved in the repair of mismatches in DNA. It is required for dam-dependent methyl-directed DNA mismatch repair. May act as a 'molecular matchmaker', a protein that promotes the formation of a stable complex between two or more DNA-binding proteins in an ATP-dependent manner without itself being part of a final effector complex. The sequence is that of DNA mismatch repair protein MutL from Bacillus cytotoxicus (strain DSM 22905 / CIP 110041 / 391-98 / NVH 391-98).